Reading from the N-terminus, the 901-residue chain is MLIKLLTKVFGSRNDRTLRRMRKAVSLINAMEPEMEKLSDDELKAKTNEFRARIEKGESVESLIPEAFAVVREASKRVFGMRHFDVQLLGGMVLNDRCIAEMRTGEGKTLTATLPAYLNALSGKGVHVVTVNDYLAQRDAENNRPLFEFLGMSVGINLPGMPAPAKREAYAADITYGTNNEYGFDYLRDNMAFSPEERVQRKLHYALVDEVDSILIDEARTPLIISGPAEDSSEMYKKVNKIIPHLIRQEKEDSDTFQGEGHFSVDEKARQVNLTERGLVLIEELLVQEGIMDEGESLYSPGNIMLMHHVTAALRAHALFTRDVDYIVKDGEVIIVDEHTGRTMQGRRWSDGLHQAVEAKEGVEIQNENQTLASITFQNYFRLYEKLAGMTGTADTEAFEFSSIYKLDTVVVPTNRPMIRKDLPDLVYMTEAEKIQAIIEDIKERTANGQPVLVGTISIEKSEVVSRELTKAGIKHNVLNAKFHANEAGIVAQAGYPAAVTIATNMAGRGTDIMLGGSWQAEVAALEAPTEEQIAQIKADWQVRHDAVLAAGGLHIIGTERHESRRIDNQLRGRSGRQGDPGSSRFYLSMEDALMRIFASDRVSGMMRKLGMKPGEAIEHPWVTKAIANAQRKVESRNFDIRKQLLEYDDVANDQRRAIYTQRNELLDVSDVSDTINSIREDVFKATIDAYIPPQSLEEMWDIPGLQERLKNDFDLELPIAEWLDKEPELHEETLRERILAQSIEVYQRKEEVVGAEMMRHFEKGVMLQTLDSLWKEHLAAMDYLRQGIHLRGYAQKDPKQEYKRESFAMFAAMLESLKYEVISTLSKVQVRMPEEVEAMEMQRREEAERLAQMQQLSHQDDDTAVAADLAAQTGERKIGRNDPCPCGSGKKYKQCHGRLS.

ATP is bound by residues Gln87, 105–109, and Asp512; that span reads GEGKT. 4 residues coordinate Zn(2+): Cys885, Cys887, Cys896, and His897.

This sequence belongs to the SecA family. In terms of assembly, monomer and homodimer. Part of the essential Sec protein translocation apparatus which comprises SecA, SecYEG and auxiliary proteins SecDF-YajC and YidC. It depends on Zn(2+) as a cofactor.

It is found in the cell inner membrane. Its subcellular location is the cytoplasm. The enzyme catalyses ATP + H2O + cellular proteinSide 1 = ADP + phosphate + cellular proteinSide 2.. Functionally, part of the Sec protein translocase complex. Interacts with the SecYEG preprotein conducting channel. Has a central role in coupling the hydrolysis of ATP to the transfer of proteins into and across the cell membrane, serving both as a receptor for the preprotein-SecB complex and as an ATP-driven molecular motor driving the stepwise translocation of polypeptide chains across the membrane. The sequence is that of Protein translocase subunit SecA from Salmonella schwarzengrund (strain CVM19633).